Here is a 416-residue protein sequence, read N- to C-terminus: Serine hydroxymethyltransferase (416 aa).

(6S)-5,6,7,8-tetrahydrofolate is bound by residues L121 and 125-127 (GHL). K229 is modified (N6-(pyridoxal phosphate)lysine).

The protein belongs to the SHMT family. Homodimer. Requires pyridoxal 5'-phosphate as cofactor.

The protein localises to the cytoplasm. The enzyme catalyses (6R)-5,10-methylene-5,6,7,8-tetrahydrofolate + glycine + H2O = (6S)-5,6,7,8-tetrahydrofolate + L-serine. It functions in the pathway one-carbon metabolism; tetrahydrofolate interconversion. The protein operates within amino-acid biosynthesis; glycine biosynthesis; glycine from L-serine: step 1/1. Functionally, catalyzes the reversible interconversion of serine and glycine with tetrahydrofolate (THF) serving as the one-carbon carrier. This reaction serves as the major source of one-carbon groups required for the biosynthesis of purines, thymidylate, methionine, and other important biomolecules. Also exhibits THF-independent aldolase activity toward beta-hydroxyamino acids, producing glycine and aldehydes, via a retro-aldol mechanism. The protein is Serine hydroxymethyltransferase of Azoarcus sp. (strain BH72).